Here is a 393-residue protein sequence, read N- to C-terminus: Myb-related transcription factor, partner of profilin (393 aa).

Over residues 1–11 (MASATAAAAPG) the composition is skewed to low complexity. The disordered stretch occupies residues 1–21 (MASATAAAAPGEAEETTRLRK). The 73-residue stretch at 16–88 (TTRLRKPRFS…EVQKRWNDFK (73 aa)) folds into the Myb-like domain. The short motif at 87-90 (FKRR) is the Nuclear localization signal element. 3 disordered regions span residues 125–254 (GPGV…EQSL), 290–323 (PLLP…APKV), and 348–393 (IISP…WKSP). A compositionally biased stretch (low complexity) spans 142–157 (AAASSQPQASTASTQR). The segment covering 160–171 (LSEDRRQDRRAD) has biased composition (basic and acidic residues). A compositionally biased stretch (polar residues) spans 173-184 (PAQSKGGSSSPE). 4 stretches are compositionally biased toward pro residues: residues 219-229 (PPLPAPPPPPT), 238-247 (SPSPTPPRPT), 296-320 (PADP…PPSA), and 359-368 (KPLPPAPPLP). Residues 375-393 (HKRRKGFPTRKRRGRWKSP) are compositionally biased toward basic residues. Short sequence motifs (nuclear localization signal) lie at residues 376–379 (KRRK) and 384–387 (RKRR).

Interacts with PFN1. Homodimer and heterodimer with PFN1. Ubiquitous. Highly expressed in brain, liver and testis. Moderate expression in heart, lung and skeletal muscle. Low expression in spleen and kidney.

The protein localises to the nucleus. In terms of biological role, transcriptional repressor; DNA-binding protein that specifically recognizes the core sequence 5'-YAAC[GT]G-3'. Dimerization with PFN1 reduces its DNA-binding capacity. In Mus musculus (Mouse), this protein is Myb-related transcription factor, partner of profilin (Mypop).